The sequence spans 226 residues: Ribonuclease 3 (226 aa).

The region spanning 6–128 is the RNase III domain; it reads INRLQRKLGY…LIGGVFLDSD (123 aa). Glu41 is a binding site for Mg(2+). Residue Asp45 is part of the active site. Positions 114 and 117 each coordinate Mg(2+). The active site involves Glu117. Residues 155–225 form the DRBM domain; sequence DPKTRLQEYL…AEQALKMLEL (71 aa).

It belongs to the ribonuclease III family. As to quaternary structure, homodimer. It depends on Mg(2+) as a cofactor.

Its subcellular location is the cytoplasm. The catalysed reaction is Endonucleolytic cleavage to 5'-phosphomonoester.. Its function is as follows. Digests double-stranded RNA. Involved in the processing of primary rRNA transcript to yield the immediate precursors to the large and small rRNAs (23S and 16S). Processes some mRNAs, and tRNAs when they are encoded in the rRNA operon. Processes pre-crRNA and tracrRNA of type II CRISPR loci if present in the organism. This is Ribonuclease 3 from Enterobacter sp. (strain 638).